The sequence spans 376 residues: Transcription factor Sp6 (376 aa).

A disordered region spans residues 1 to 70; the sequence is MLTAVCGSLG…VDFSQGYELP (70 aa). The 9aaTAD motif lies at 118–126; sequence GSWWDLHPG. A disordered region spans residues 167-223; that stretch reads HPHAHHLLPAAGGQHLLGPPDGAKALEVAAPESQGLDSSLDGAARPKGSRRSVPRSS. Low complexity predominate over residues 173–186; that stretch reads LLPAAGGQHLLGPP. C2H2-type zinc fingers lie at residues 254–278, 284–308, and 314–336; these read HNCH…LRWH, FVCN…LQTH, and FPCA…MKTH. Residues 333 to 343 are compositionally biased toward basic and acidic residues; the sequence is MKTHEGAKEEA. Residues 333-376 are disordered; the sequence is MKTHEGAKEEAAGAASGEGKAGGAVEPPGGKGKREAEGSVAPSN.

It belongs to the Sp1 C2H2-type zinc-finger protein family. Ubiquitous.

The protein resides in the nucleus. Functionally, promotes cell proliferation. Plays a role in tooth germ growth. Plays a role in the control of enamel mineralization. Binds the AMBN promoter. The chain is Transcription factor Sp6 (SP6) from Homo sapiens (Human).